A 254-amino-acid polypeptide reads, in one-letter code: Putative hydro-lyase SACE_1553 (254 aa).

The protein belongs to the D-glutamate cyclase family.

The chain is Putative hydro-lyase SACE_1553 from Saccharopolyspora erythraea (strain ATCC 11635 / DSM 40517 / JCM 4748 / NBRC 13426 / NCIMB 8594 / NRRL 2338).